Consider the following 1345-residue polypeptide: DNA-directed RNA polymerase subunit beta (1345 aa).

This sequence belongs to the RNA polymerase beta chain family. The RNAP catalytic core consists of 2 alpha, 1 beta, 1 beta' and 1 omega subunit. When a sigma factor is associated with the core the holoenzyme is formed, which can initiate transcription.

The enzyme catalyses RNA(n) + a ribonucleoside 5'-triphosphate = RNA(n+1) + diphosphate. Functionally, DNA-dependent RNA polymerase catalyzes the transcription of DNA into RNA using the four ribonucleoside triphosphates as substrates. The chain is DNA-directed RNA polymerase subunit beta from Shewanella oneidensis (strain ATCC 700550 / JCM 31522 / CIP 106686 / LMG 19005 / NCIMB 14063 / MR-1).